The chain runs to 144 residues: Ribosomal RNA large subunit methyltransferase H (144 aa).

S-adenosyl-L-methionine contacts are provided by residues Gly-92 and 111 to 116 (LSPMTF).

The protein belongs to the RNA methyltransferase RlmH family. Homodimer.

The protein localises to the cytoplasm. It catalyses the reaction pseudouridine(1915) in 23S rRNA + S-adenosyl-L-methionine = N(3)-methylpseudouridine(1915) in 23S rRNA + S-adenosyl-L-homocysteine + H(+). Its function is as follows. Specifically methylates the pseudouridine at position 1915 (m3Psi1915) in 23S rRNA. This chain is Ribosomal RNA large subunit methyltransferase H, found in Synechococcus sp. (strain CC9311).